The sequence spans 813 residues: Raf homolog serine/threonine-protein kinase (813 aa).

The interval 1 to 79 is disordered; sequence MSRINFKKSS…GGAGTSDKEP (79 aa). Residues 9-23 are compositionally biased toward low complexity; that stretch reads SSASTTPTSPHCPSP. The RBD domain occupies 85-161; that stretch reads KMIMVHLPFD…PGNELWVHSE (77 aa). The segment at 170–217 adopts a Phorbol-ester/DAG-type zinc-finger fold; that stretch reads KHAIVRRTFIPPKSCDVCNNPIWMMGFRCEFCQFKFHQRCSSFAPLYC. Residues Cys184, Cys187, Cys198, Cys201, His206, Cys209, and Cys217 each contribute to the Zn(2+) site. 2 stretches are compositionally biased toward polar residues: residues 258–273 and 291–301; these read TSGQ…SHPD and SPQNETSQLSP. 3 disordered regions span residues 258-315, 338-358, and 383-472; these read TSGQ…SAPN, QRLE…QARH, and TPLG…PHHE. The segment covering 338–348 has biased composition (basic and acidic residues); it reads QRLEEESRDKT. The span at 386–399 shows a compositional bias: low complexity; it reads GSNSPSSTCSSPPG. Positions 406-421 are enriched in polar residues; that stretch reads TLGQSPNVSGSTTSSL. The segment covering 453–462 has biased composition (basic and acidic residues); it reads SPGERLDAQR. In terms of domain architecture, Protein kinase spans 481 to 748; that stretch reads FIIQYKVGSG…VLERLRDIIL (268 aa). ATP is bound by residues 487-495 and Lys507; that span reads VGSGSFGTV. Asp602 serves as the catalytic Proton acceptor.

Belongs to the protein kinase superfamily. TKL Ser/Thr protein kinase family. RAF subfamily. In terms of assembly, interacts with cdf-1 in a zinc-dependent manner which promotes its activity. It depends on Zn(2+) as a cofactor.

The catalysed reaction is L-seryl-[protein] + ATP = O-phospho-L-seryl-[protein] + ADP + H(+). It catalyses the reaction L-threonyl-[protein] + ATP = O-phospho-L-threonyl-[protein] + ADP + H(+). In terms of biological role, protein kinase that participates in the induction of vulva and has roles in fertility and viability. Acts downstream of the Ras protein let-60. Required for progression of developing oocytes through the pachytene stage. Plays a role in responses to M.nematophilum-mediated bacterial infection by promoting tail swelling and preventing constipation. Positively regulates lifespan upstream of mek-2 and mpk-1. In Caenorhabditis elegans, this protein is Raf homolog serine/threonine-protein kinase (lin-45).